A 276-amino-acid polypeptide reads, in one-letter code: Shikimate dehydrogenase (NADP(+)) (276 aa).

Residues 15–17 (SMS) and Thr63 contribute to the shikimate site. Residue Lys67 is the Proton acceptor of the active site. Residue Asp79 coordinates NADP(+). Shikimate-binding residues include Asn88 and Asp103. Residues 130–134 (GAGGA), 154–159 (NRTLSR), and Ile217 contribute to the NADP(+) site. Tyr219 contacts shikimate. Gly240 provides a ligand contact to NADP(+).

The protein belongs to the shikimate dehydrogenase family. In terms of assembly, homodimer.

The enzyme catalyses shikimate + NADP(+) = 3-dehydroshikimate + NADPH + H(+). Its pathway is metabolic intermediate biosynthesis; chorismate biosynthesis; chorismate from D-erythrose 4-phosphate and phosphoenolpyruvate: step 4/7. Its function is as follows. Involved in the biosynthesis of the chorismate, which leads to the biosynthesis of aromatic amino acids. Catalyzes the reversible NADPH linked reduction of 3-dehydroshikimate (DHSA) to yield shikimate (SA). This chain is Shikimate dehydrogenase (NADP(+)), found in Oceanobacillus iheyensis (strain DSM 14371 / CIP 107618 / JCM 11309 / KCTC 3954 / HTE831).